We begin with the raw amino-acid sequence, 572 residues long: Phosphoenolpyruvate-protein phosphotransferase (572 aa).

His190 (tele-phosphohistidine intermediate) is an active-site residue. The phosphoenolpyruvate site is built by Arg297 and Arg333. Mg(2+) is bound by residues Glu432 and Asp456. Residues 455–456 (ND) and Arg466 contribute to the phosphoenolpyruvate site. The active-site Proton donor is the Cys503.

Belongs to the PEP-utilizing enzyme family. As to quaternary structure, homodimer. The cofactor is Mg(2+).

It is found in the cytoplasm. It carries out the reaction L-histidyl-[protein] + phosphoenolpyruvate = N(pros)-phospho-L-histidyl-[protein] + pyruvate. In terms of biological role, general (non sugar-specific) component of the phosphoenolpyruvate-dependent sugar phosphotransferase system (sugar PTS). This major carbohydrate active-transport system catalyzes the phosphorylation of incoming sugar substrates concomitantly with their translocation across the cell membrane. Enzyme I transfers the phosphoryl group from phosphoenolpyruvate (PEP) to the phosphoryl carrier protein (HPr). The protein is Phosphoenolpyruvate-protein phosphotransferase (ptsI) of Listeria innocua serovar 6a (strain ATCC BAA-680 / CLIP 11262).